The following is a 431-amino-acid chain: Adenylosuccinate synthetase (431 aa).

GTP contacts are provided by residues 13-19 (GDEGKGK) and 41-43 (GHT). The active-site Proton acceptor is aspartate 14. Residues aspartate 14 and glycine 41 each coordinate Mg(2+). Residues 14–17 (DEGK), 39–42 (NAGH), threonine 130, arginine 144, glutamine 225, threonine 240, and arginine 304 each bind IMP. Residue histidine 42 is the Proton donor of the active site. 300–306 (ATTGRKR) is a binding site for substrate. Residues arginine 306, 332–334 (KLD), and 415–417 (STG) contribute to the GTP site.

This sequence belongs to the adenylosuccinate synthetase family. Homodimer. Mg(2+) is required as a cofactor.

The protein localises to the cytoplasm. The catalysed reaction is IMP + L-aspartate + GTP = N(6)-(1,2-dicarboxyethyl)-AMP + GDP + phosphate + 2 H(+). Its pathway is purine metabolism; AMP biosynthesis via de novo pathway; AMP from IMP: step 1/2. Functionally, plays an important role in the de novo pathway of purine nucleotide biosynthesis. Catalyzes the first committed step in the biosynthesis of AMP from IMP. This chain is Adenylosuccinate synthetase, found in Shewanella loihica (strain ATCC BAA-1088 / PV-4).